The sequence spans 74 residues: Toxin Td6 (74 aa).

A signal peptide spans 1 to 8 (IGMIVECE). The 63-residue stretch at 9 to 71 (KEGYLMEANG…IWDSATNTCG (63 aa)) folds into the LCN-type CS-alpha/beta domain. Cystine bridges form between C19-C70, C23-C45, C31-C51, and C35-C53. At R72 the chain carries Arginine amide.

It belongs to the long (4 C-C) scorpion toxin superfamily. Sodium channel inhibitor family. Beta subfamily. Expressed by the venom gland.

Its subcellular location is the secreted. In terms of biological role, beta toxins bind voltage-independently at site-4 of sodium channels (Nav) and shift the voltage of activation toward more negative potentials thereby affecting sodium channel activation and promoting spontaneous and repetitive firing. The sequence is that of Toxin Td6 from Tityus discrepans (Venezuelan scorpion).